A 557-amino-acid polypeptide reads, in one-letter code: DNA mismatch repair protein MutL (557 aa).

Belongs to the DNA mismatch repair MutL/HexB family.

This protein is involved in the repair of mismatches in DNA. It is required for dam-dependent methyl-directed DNA mismatch repair. May act as a 'molecular matchmaker', a protein that promotes the formation of a stable complex between two or more DNA-binding proteins in an ATP-dependent manner without itself being part of a final effector complex. This Methanothrix thermoacetophila (strain DSM 6194 / JCM 14653 / NBRC 101360 / PT) (Methanosaeta thermophila) protein is DNA mismatch repair protein MutL.